The primary structure comprises 1558 residues: ABC transporter NFT1 (1558 aa).

Over 1–29 the chain is Extracellular; it reads MIKNGTCPFWERDDLSECARREYIEFKFP. An N-linked (GlcNAc...) asparagine glycan is attached at asparagine 4. Residues 30-50 traverse the membrane as a helical segment; it reads LFILLTGMIYAFCKVFRAFYL. The Cytoplasmic portion of the chain corresponds to 51-103; sequence RRKNHTNEAPEFEEQGNGNHEYARFSVLRLKSAWESRSFCNVNNRSTFDKFKK. The chain crosses the membrane as a helical span at residues 104–124; it reads FIEGAFIVLQLTIHLYILSNM. Over 125-130 the chain is Extracellular; it reads PMDNKK. The helical transmembrane segment at 131 to 151 threads the bilayer; sequence FFHQGFLVQMFLWILLLVVIT. The Cytoplasmic segment spans residues 152–169; the sequence is LRLISASQSFRWVLACKR. The helical transmembrane segment at 170 to 190 threads the bilayer; it reads DLWAVSFYSYASLFTLSILPL. Topologically, residues 191-201 are extracellular; it reads RSVFIGKIKDK. A helical transmembrane segment spans residues 202–222; the sequence is IMVKYIISETFIDLALLLLLS. At 223–302 the chain is on the cytoplasmic side; sequence TSSIEGTRYS…SSKKGRLLPN (80 aa). A helical transmembrane segment spans residues 303-323; the sequence is IICYFKAVFISQLFLAFVSSF. The region spanning 311 to 621 is the ABC transmembrane type-1 1 domain; sequence FISQLFLAFV…IASTVSLLIQ (311 aa). The Extracellular segment spans residues 324–351; sequence LNFVPSLLMPRILSYVNDPKSQSWNLVS. Residues 352 to 374 traverse the membrane as a helical segment; the sequence is LYVSSMLVSKIIATTCRGQGLFL. The Cytoplasmic segment spans residues 375 to 449; it reads GEKGTMQLRT…VMSIDAFKVS (75 aa). The disordered stretch occupies residues 410 to 434; it reads NASTSFEENPDSSEAEPRKKSSRKD. Positions 424-434 are enriched in basic and acidic residues; it reads AEPRKKSSRKD. Residues 450-470 form a helical membrane-spanning segment; that stretch reads EAMNTFYLACEAVFMTVTALM. Residues 471 to 481 are Extracellular-facing; it reads ILYSLLGWSAF. A helical transmembrane segment spans residues 482–504; that stretch reads AGTFALLAMIPLNFWCATFYGNY. The Cytoplasmic segment spans residues 505-558; that stretch reads QADQLILTDKRTSGISEALNSIRVIKLLAWENLFYQKIINVRDGEIRLLKKKAT. The helical transmembrane segment at 559–579 threads the bilayer; the sequence is IFFLNHLIWFFGPTLVSAITF. Residues 580 to 584 are Extracellular-facing; sequence SVFIK. A helical membrane pass occupies residues 585–605; it reads FQNQTLTPTIAFTALSLFAIL. The Cytoplasmic portion of the chain corresponds to 606 to 953; the sequence is RTPMDQIAST…KFSAYKWLAD (348 aa). Residues 651–892 enclose the ABC transporter 1 domain; that stretch reads FGFEDASMEW…NEFLRESINN (242 aa). 686-693 contributes to the ATP binding site; the sequence is GPTGSGKS. Over residues 892–901 the composition is skewed to polar residues; the sequence is NDSKNTTHNQ. The segment at 892–926 is disordered; that stretch reads NDSKNTTHNQIDLKRSTTSKKTKNGDPEGENSQDE. Residues 954 to 974 form a helical membrane-spanning segment; that stretch reads YFGGLGVVFVFTSSAILIHGI. In terms of domain architecture, ABC transmembrane type-1 2 spans 961 to 1251; the sequence is VFVFTSSAIL…IIKVFSSVEL (291 aa). Residues 975–1013 lie on the Extracellular side of the membrane; that stretch reads TLSQGFWLRYWLETGSSGSKSTWLYRIVEGHSNIYFILT. The helical transmembrane segment at 1014–1034 threads the bilayer; it reads YIVIGFVSSFLTSGKVWIAII. Residues 1035–1082 lie on the Cytoplasmic side of the membrane; the sequence is SGTNVTKKIFAKLLSSILYAKLRFHNVTPTGRIMNRFSKDMDIIDQQL. Residues 1083-1105 form a helical membrane-spanning segment; sequence IPNFEGLSYSVVVCLWIILLIGY. The Extracellular segment spans residues 1106–1109; sequence VTPQ. A helical membrane pass occupies residues 1110–1132; sequence FLLFAIPLCALYYTVCTLYLRAS. The Cytoplasmic segment spans residues 1133 to 1199; the sequence is RELKRIDNIN…ATEWITYRVD (67 aa). Residues 1200–1220 form a helical membrane-spanning segment; sequence IIGTLVLFSSSVMIIMKASYL. The Extracellular portion of the chain corresponds to 1221–1222; it reads DA. The helical transmembrane segment at 1223 to 1243 threads the bilayer; sequence GLAGILLSNAFSFTETAQWII. The Cytoplasmic portion of the chain corresponds to 1244–1558; it reads KVFSSVELLM…LAKVSFDNKR (315 aa). Positions 1285–1538 constitute an ABC transporter 2 domain; the sequence is VELKNLSLRY…RNTIFYRLCR (254 aa). ATP is bound at residue 1319-1326; it reads GRTGAGKS.

This sequence belongs to the ABC transporter superfamily. ABCC family. Conjugate transporter (TC 3.A.1.208) subfamily.

Its subcellular location is the membrane. This Saccharomyces cerevisiae (strain YJM789) (Baker's yeast) protein is ABC transporter NFT1 (NFT1).